The following is a 338-amino-acid chain: Ornithine carbamoyltransferase, catabolic (338 aa).

Carbamoyl phosphate contacts are provided by residues serine 58 to threonine 61, glutamine 85, arginine 109, and histidine 136 to glutamine 139. L-ornithine contacts are provided by residues asparagine 168, aspartate 232, and serine 236 to methionine 237. Carbamoyl phosphate is bound by residues cysteine 273 to leucine 274 and arginine 318.

Belongs to the aspartate/ornithine carbamoyltransferase superfamily. OTCase family.

It is found in the cytoplasm. It catalyses the reaction carbamoyl phosphate + L-ornithine = L-citrulline + phosphate + H(+). Its pathway is amino-acid degradation; L-arginine degradation via ADI pathway; carbamoyl phosphate from L-arginine: step 2/2. In terms of biological role, reversibly catalyzes the transfer of the carbamoyl group from carbamoyl phosphate (CP) to the N(epsilon) atom of ornithine (ORN) to produce L-citrulline. This chain is Ornithine carbamoyltransferase, catabolic, found in Streptococcus gordonii (strain Challis / ATCC 35105 / BCRC 15272 / CH1 / DL1 / V288).